The following is a 269-amino-acid chain: Protein shisa-1 (269 aa).

The signal sequence occupies residues 1–18 (MEFIVLLTVCALLGLSCG). At 19-98 (QHGEYCHGWT…LPPTVPTYFP (80 aa)) the chain is on the extracellular side. The helical transmembrane segment at 99-119 (FLLVGSIFVSFVILGSLVGLC) threads the bilayer. The Cytoplasmic segment spans residues 120–269 (CCKCLKPEDD…TVCSGSPSKC (150 aa)). Residues 129–167 (DTQVSGPAPIQSRLLDQDPSTDTSRHSSSSSASMPRPPI) form a disordered region. A compositionally biased stretch (low complexity) spans 146–162 (DPSTDTSRHSSSSSASM).

It belongs to the shisa family. In terms of assembly, interacts with immature forms of fzd8 and fgfr.

It is found in the endoplasmic reticulum. It localises to the membrane. Required for head formation during gastrulation. Functions as an inhibitor for the caudalizing signals wnt and fgf, does not inhibit bmp, activin and nodal signaling in head formation process. Induces retention of fzd8 in the endoplasmic reticulum and inhibits trafficking of fzd8 to the cell surface. The chain is Protein shisa-1 (shisa1) from Xenopus laevis (African clawed frog).